Here is a 61-residue protein sequence, read N- to C-terminus: Temporin-CDYa (61 aa).

Positions methionine 1 to cysteine 22 are cleaved as a signal peptide. Positions glutamate 23–glutamate 44 are excised as a propeptide. At leucine 59 the chain carries Leucine amide.

This sequence belongs to the frog skin active peptide (FSAP) family. Temporin subfamily. In terms of tissue distribution, expressed by the skin glands.

It localises to the secreted. Its function is as follows. Antimicrobial peptide. This chain is Temporin-CDYa, found in Rana dybowskii (Dybovsky's frog).